A 140-amino-acid polypeptide reads, in one-letter code: Glycine cleavage system H protein (140 aa).

One can recognise a Lipoyl-binding domain in the interval 22–104; that stretch reads EVVIGITRFA…YGKGWMLRLK (83 aa). Position 63 is an N6-lipoyllysine (lysine 63).

This sequence belongs to the GcvH family. The glycine cleavage system is composed of four proteins: P, T, L and H. (R)-lipoate serves as cofactor.

Its function is as follows. The glycine cleavage system catalyzes the degradation of glycine. The H protein shuttles the methylamine group of glycine from the P protein to the T protein. The sequence is that of Glycine cleavage system H protein from Magnetococcus marinus (strain ATCC BAA-1437 / JCM 17883 / MC-1).